The primary structure comprises 1700 residues: MKTLSSLLLVLAVNVLLIQASPDPDNRCPARKYWNERKQACVCKRENRCYPIGAIFDPESCTFSMCQSKGCSAKQIFNKDKCACECRNDQPKDGCGAGRYWCNQDCSCKCSTPMSAGGCSGSQIWCEKSCACVCPNADKCTAPQVWNKDTCCCGCPVNMQEPADGCTKPLIWDKVDCRCECPLKKDCGKNRDWSDSSCSCECKGDGKCQGSKIWCKNNCRCICPTAEPAGGCSAPLKWDDDKCSCACPAKMEEKKEKCVESGKIWNPNTCECGCAQLNCPDNKKANKETCQCECKEVKKCNGGQVFCKDSCSCVCPGGDKDKTCTAPQVYDGVACSCSCPVNMQKPADGCPRPQKWDKEECRCECPVKHDCKNGKVWDETICQCICPRDAPVCTAGKERCGESCECKCINREPKEGCAKPLVWNENTCKCVCPADKQMSPGGCGSGKSFNKLTCQCECDQSASKCGLKRWNADTCKCECQPGMPPEGCGKQTWISDKCKCECSPTITCQAPQILDLNTCECKCPVNMLAQKEKCKSPRQWTDSKCLCECSTTPATCEGKQTWCGEACQCICPGGDKNCGNKKFFDKPSCECKCKNNPTCTSPQVWDADDCECKCPKDKQKPQGGCDGGQKWNDRVCSCGCPVPRPDCTNGQIYNINTCACGCGIDKPSCPKQQIYNWKTCDCECPNGMKEPVGGCGAKTWLDDECQCDCVPGKPKGGCTGAQKWCDKTCKCKCEKEMPTGGCENNKKWCDETCDCVCPQKNTCIAPKVWDAKTCSCICVNPPKCNSPQVLKDTCCCGCQNVKSCKAPQKFIENICDCACPNKKQCKAPLVWSDEFCDCVCPNSASMKTCLSPKEWNKVTCTCDCNPPKPDCCPGTQKWMDDKCKCGCPNAQTDCAGGKKFNDFTCSCGCPSGKLDCTGNTKWSAETCTCGCGDVNRNCGNLKNFNDNLCQCECKNKQEMANCKSPRTWNYDTCKCVCKNADDSDDCVKPQIWLDDQCKCGCPASAQMTCPANKRFIEKSCSCECKSPMPSPIPQGKKWNEDKCVVECANVKTCEGPQRWCDNQCKCICPQVNTKCSDKQKFIESKCECGCETQTQCKDGFRWSNLECGCLCDDKKCPGKQVFDKNTCQCKCPNQKPGDTCGNGKDFCPLDCSCKCKNPKPANGCTGVQEWNEEKCQCECPKDKPKKQCPGGQDWNNHQCQCGCPTPAPTCSNNQKYSNVSCSCGCNPGKPKNGCPGNQIWCDNTCRCVCPKNMEKPADNCKTKWWNDEMCQCVCKPGCPEGGCKGVMKWNANTCSCECPADKAKPASCGDKKSWNDDSCSCQCKSKMPCGGCPPNQQWNEKDCECKCSATGNCPAGQTWNSQTCQCSCPATGKCTGAQVWCSKACKCVCPAQKKCDSPKTWDENSCSCQCPKNMRPPTGGCNAGRTWDDATCSEKCAATPKCDSPKVFDPTTCGCKCGNKPNKLDAGRTWDEQKCKMTCDLPAIPCCHYEGQVYDSNTCKCGCPKEETCKQGFSFSPKSGCKCILECNKKDPGCGAKKIWCQETCKCECASEPPRMGCGPNRYWDKEDCACQCLKTKVCTDSDFSFFSHDTCDCECSNAKDFILNCNQKLNKVSCQPQCIQRPPPEGCAEKFGEFFSWDPKACECKCIEQKTTVKGRVFDKATCNFKCTNEPKTNPKCANTAESWDSQICACKVCSTCKH.

An N-terminal signal peptide occupies residues 1-20; it reads MKTLSSLLLVLAVNVLLIQA.

As to expression, salivary gland.

The protein localises to the secreted. Its function is as follows. Used by the larvae to construct a supramolecular structure, the larval tube. Balbiani ring protein 3 could play a role as a transport protein that binds to other proteins intracellularly and in the gland lumen in order to prevent these from forming water-insoluble fibers too early. This chain is Balbiani ring protein 3 (BR3), found in Chironomus tentans (Midge).